Here is a 36-residue protein sequence, read N- to C-terminus: GPVQPTYPGDDAPVEDLVRFYNDLQQYLNVVTRHRY.

Tyrosine amide is present on Y36.

Belongs to the NPY family.

Its subcellular location is the secreted. In terms of biological role, hormone secreted by pancreatic cells that acts as a regulator of pancreatic and gastrointestinal functions. The protein is Pancreatic polypeptide (PPY) of Larus argentatus (Herring gull).